Here is a 411-residue protein sequence, read N- to C-terminus: Putative nickel insertion protein (411 aa).

This sequence belongs to the LarC family.

This is Putative nickel insertion protein from Acaryochloris marina (strain MBIC 11017).